The primary structure comprises 405 residues: MTIDRNALGFGVGERAIFAADPWNSRGRLYPEGGSLTRSDFQRDRDRIVHTTAFRRLKHKTQVFIGPDSDHYRTRLTHTIEVAQIARALARAFRIDEDLAEGVALVHDFGHTPFGHTGEDALHELLEPYGGFDHNAQSLRIVTKLERRYAEFDGLNLTWETLEGLVKHNGPLMNADGEGTRGPVPLPITEYCQMQDLDIASHASLEAQAAAVADDIAYNTHDIDDGLRSGYLTFDMLEDVPFLAGLMRDVRDRYPNLEADRFTHEIMRRQITRMVEDVIAVAQERLARIRPMSADDIRQAGETVITFSEGMAETDRQIKKLLFSKIYRHPDIMRIRAGAAQIVTDLFKAYMADPTLMRSDYWVEHTAGLETPAKARHVGDFLAGMTDTYAVRVHRQLFDHTPDLR.

One can recognise an HD domain in the interval 75 to 219; the sequence is RLTHTIEVAQ…AAVADDIAYN (145 aa).

This sequence belongs to the dGTPase family. Type 2 subfamily.

The polypeptide is Deoxyguanosinetriphosphate triphosphohydrolase-like protein (Allorhizobium ampelinum (strain ATCC BAA-846 / DSM 112012 / S4) (Agrobacterium vitis (strain S4))).